The sequence spans 25 residues: Small ribosomal subunit protein eS32 (25 aa).

A disordered region spans residues 1 to 25 (MRDKWRKKRVRRLKRKRRKVRARSK).

It belongs to the eukaryotic ribosomal protein eS32 family. Component of the small ribosomal subunit. Mature ribosomes consist of a small (40S) and a large (60S) subunit. The 40S subunit contains about 32 different proteins and 1 molecule of RNA (18S). The 60S subunit contains 45 different proteins and 3 molecules of RNA (25S, 5.8S and 5S).

Its subcellular location is the cytoplasm. In terms of biological role, component of the ribosome, a large ribonucleoprotein complex responsible for the synthesis of proteins in the cell. The small ribosomal subunit (SSU) binds messenger RNAs (mRNAs) and translates the encoded message by selecting cognate aminoacyl-transfer RNA (tRNA) molecules. The large subunit (LSU) contains the ribosomal catalytic site termed the peptidyl transferase center (PTC), which catalyzes the formation of peptide bonds, thereby polymerizing the amino acids delivered by tRNAs into a polypeptide chain. The nascent polypeptides leave the ribosome through a tunnel in the LSU and interact with protein factors that function in enzymatic processing, targeting, and the membrane insertion of nascent chains at the exit of the ribosomal tunnel. The chain is Small ribosomal subunit protein eS32 from Candida albicans (strain SC5314 / ATCC MYA-2876) (Yeast).